The sequence spans 205 residues: Large ribosomal subunit protein bL21 (205 aa).

The segment at 107–137 (APAKKAAAKKEEAPKADTAPKAAAAPTEEAA) is disordered. A compositionally biased stretch (low complexity) spans 122 to 137 (ADTAPKAAAAPTEEAA).

Belongs to the bacterial ribosomal protein bL21 family. As to quaternary structure, part of the 50S ribosomal subunit. Contacts protein L20.

Functionally, this protein binds to 23S rRNA in the presence of protein L20. This Hyphomonas neptunium (strain ATCC 15444) protein is Large ribosomal subunit protein bL21.